The chain runs to 305 residues: tRNA dimethylallyltransferase (305 aa).

8–15 (GPTAVGKT) is an ATP binding site. Residue 10–15 (TAVGKT) participates in substrate binding. The segment at 33–36 (DSRQ) is interaction with substrate tRNA.

Belongs to the IPP transferase family. In terms of assembly, monomer. Mg(2+) is required as a cofactor.

The enzyme catalyses adenosine(37) in tRNA + dimethylallyl diphosphate = N(6)-dimethylallyladenosine(37) in tRNA + diphosphate. In terms of biological role, catalyzes the transfer of a dimethylallyl group onto the adenine at position 37 in tRNAs that read codons beginning with uridine, leading to the formation of N6-(dimethylallyl)adenosine (i(6)A). This Thermotoga sp. (strain RQ2) protein is tRNA dimethylallyltransferase.